A 256-amino-acid chain; its full sequence is Type III pantothenate kinase (256 aa).

Residue 7 to 14 coordinates ATP; sequence DIGNTNVV. Substrate is bound at residue 108–111; it reads GADC. Residue Asp-110 is the Proton acceptor of the active site. K(+) is bound at residue Asp-130. Thr-133 provides a ligand contact to ATP. Residue Thr-185 participates in substrate binding.

Belongs to the type III pantothenate kinase family. Homodimer. The cofactor is NH4(+). K(+) is required as a cofactor.

Its subcellular location is the cytoplasm. It catalyses the reaction (R)-pantothenate + ATP = (R)-4'-phosphopantothenate + ADP + H(+). The protein operates within cofactor biosynthesis; coenzyme A biosynthesis; CoA from (R)-pantothenate: step 1/5. Its function is as follows. Catalyzes the phosphorylation of pantothenate (Pan), the first step in CoA biosynthesis. In Bifidobacterium adolescentis (strain ATCC 15703 / DSM 20083 / NCTC 11814 / E194a), this protein is Type III pantothenate kinase.